Consider the following 876-residue polypeptide: DNA mismatch repair protein MutS (876 aa).

628–635 (GPNMAGKS) is a binding site for ATP.

Belongs to the DNA mismatch repair MutS family.

Its function is as follows. This protein is involved in the repair of mismatches in DNA. It is possible that it carries out the mismatch recognition step. This protein has a weak ATPase activity. The polypeptide is DNA mismatch repair protein MutS (Chlorobaculum parvum (strain DSM 263 / NCIMB 8327) (Chlorobium vibrioforme subsp. thiosulfatophilum)).